We begin with the raw amino-acid sequence, 51 residues long: Large ribosomal subunit protein eL39z/eL39x (51 aa).

The tract at residues 1–21 (MPSHKSFMIKKKLGKKMRQNR) is disordered. Positions 7-19 (FMIKKKLGKKMRQ) are enriched in basic residues.

This sequence belongs to the eukaryotic ribosomal protein eL39 family.

In Arabidopsis thaliana (Mouse-ear cress), this protein is Large ribosomal subunit protein eL39z/eL39x (RPL39A).